We begin with the raw amino-acid sequence, 749 residues long: Cytosolic phospholipase A2 (749 aa).

Residues 1 to 178 (MSFIDPYQHI…MKKLLGPKNS (178 aa)) form a phospholipid binding region. Ser2 carries the post-translational modification Phosphoserine. In terms of domain architecture, C2 spans 6 to 122 (PYQHIIVEHH…KVGEKKQVPF (117 aa)). Residues Asp40, Thr41, Asp43, Asn65, Asp93, Ala94, and Asn95 each contribute to the Ca(2+) site. The region spanning 140–740 (SSPDLRFSMA…SSVEARRFFN (601 aa)) is the PLA2c domain. Ser228 serves as the catalytic Nucleophile. Thr268 is modified (phosphothreonine). Residues 426-458 (AKHIVSNDSSDSDDESQGPKGTEHEEAEREYQN) form a disordered region. 3 positions are modified to phosphoserine: Ser434, Ser435, and Ser437. Over residues 446–457 (GTEHEEAEREYQ) the composition is skewed to basic and acidic residues. The residue at position 505 (Ser505) is a Phosphoserine; by MAPK. Phosphoserine is present on Ser515. A Glycyl lysine isopeptide (Lys-Gly) (interchain with G-Cter in SUMO2) cross-link involves residue Lys541. Catalysis depends on Asp549, which acts as the Proton acceptor. Residue Lys606 forms a Glycyl lysine isopeptide (Lys-Gly) (interchain with G-Cter in SUMO2) linkage. A phosphoserine mark is found at Ser727 and Ser729.

Interacts with KAT5. Post-translationally, phosphorylated at both Ser-505 and Ser-727 in response to mitogenic stimuli. As to expression, detected in granulosa cells after stimulation with chorionic gonadotropin (at protein level).

Its subcellular location is the cytoplasm. It is found in the golgi apparatus membrane. It localises to the nucleus envelope. It carries out the reaction a 1,2-diacyl-sn-glycero-3-phosphocholine + H2O = a 1-acyl-sn-glycero-3-phosphocholine + a fatty acid + H(+). It catalyses the reaction a 1-O-alkyl-2-acyl-sn-glycero-3-phosphocholine + H2O = a 1-O-alkyl-sn-glycero-3-phosphocholine + a fatty acid + H(+). The catalysed reaction is a 1-acyl-sn-glycero-3-phosphocholine + H2O = sn-glycerol 3-phosphocholine + a fatty acid + H(+). The enzyme catalyses 1-hexadecanoyl-2-(5Z,8Z,11Z,14Z-eicosatetraenoyl)-sn-glycero-3-phosphocholine + H2O = 1-hexadecanoyl-sn-glycero-3-phosphocholine + (5Z,8Z,11Z,14Z)-eicosatetraenoate + H(+). It carries out the reaction 1,2-di-(5Z,8Z,11Z,14Z-eicosatetraenoyl)-sn-glycero-3-phosphocholine + H2O = 1-(5Z,8Z,11Z,14Z-eicosatetraenoyl)-sn-glycero-3-phosphocholine + (5Z,8Z,11Z,14Z)-eicosatetraenoate + H(+). It catalyses the reaction 1-octadecanoyl-2-(5Z,8Z,11Z,14Z-eicosatetraenoyl)-sn-glycero-3-phosphocholine + H2O = 1-octadecanoyl-sn-glycero-3-phosphocholine + (5Z,8Z,11Z,14Z)-eicosatetraenoate + H(+). The catalysed reaction is 1-hexadecanoyl-2-(9Z,12Z-octadecadienoyl)-sn-glycero-3-phosphocholine + H2O = (9Z,12Z)-octadecadienoate + 1-hexadecanoyl-sn-glycero-3-phosphocholine + H(+). The enzyme catalyses 1-octadecanoyl-2-(9Z,12Z,15Z-octadecatrienoyl)-sn-glycero-3-phosphocholine + H2O = (9Z,12Z,15Z)-octadecatrienoate + 1-octadecanoyl-sn-glycero-3-phosphocholine + H(+). It carries out the reaction 1-(5Z,8Z,11Z,14Z-eicosatetraenoyl)-2-hexadecanoyl-sn-glycero-3-phosphocholine + H2O = 1-(5Z,8Z,11Z,14Z-eicosatetraenoyl)-sn-glycero-3-phosphocholine + hexadecanoate + H(+). It catalyses the reaction 1-O-hexadecyl-2-(5Z,8Z,11Z,14Z)-eicosatetraenoyl-sn-glycero-3-phosphocholine + H2O = 1-O-hexadecyl-sn-glycero-3-phosphocholine + (5Z,8Z,11Z,14Z)-eicosatetraenoate + H(+). The catalysed reaction is 1,2-di-(9Z-octadecenoyl)-sn-glycero-3-phospho-(1'-sn-glycerol) + H2O = 1-(9Z-octadecenoyl)-sn-glycero-3-phospho-(1'-sn-glycerol) + (9Z)-octadecenoate + H(+). The enzyme catalyses 1-octadecanoyl-2-(5Z,8Z,11Z,14Z-eicosatetraenoyl)-sn-glycero-3-phosphate + H2O = 1-octadecanoyl-sn-glycero-3-phosphate + (5Z,8Z,11Z,14Z)-eicosatetraenoate + H(+). It carries out the reaction 1-hexadecanoyl-sn-glycero-3-phosphocholine + H2O = sn-glycerol 3-phosphocholine + hexadecanoate + H(+). It catalyses the reaction 2-(prostaglandin E2)-sn-glycero-3-phosphoethanolamine + H2O = sn-glycero-3-phosphoethanolamine + prostaglandin E2 + H(+). The catalysed reaction is 2-[(15S)-hydroxy-(5Z,8Z,11Z,13E)-eicosatetraenoyl]-sn-glycero-3-phosphocholine + H2O = (15S)-hydroxy-(5Z,8Z,11Z,13E)-eicosatetraenoate + sn-glycerol 3-phosphocholine + H(+). The enzyme catalyses 2-[(15R)-hydroxy-(5Z,8Z,11Z,13E)-eicosatetraenoyl]-sn-glycero-3-phosphocholine + H2O = (15R)-hydroxy-(5Z,8Z,11Z,13E)-eicosatetraenoate + sn-glycerol 3-phosphocholine + H(+). It carries out the reaction 2-(prostaglandin E2)-sn-glycero-3-phosphocholine + H2O = prostaglandin E2 + sn-glycerol 3-phosphocholine + H(+). It catalyses the reaction 2-[(11R)-hydroxy-(5Z,8Z,12E,14Z)-eicosatetraenoyl]-sn-glycero-3-phosphocholine + H2O = (11R)-hydroxy-(5Z,8Z,12E,14Z)-eicosatetraenoate + sn-glycerol 3-phosphocholine + H(+). The catalysed reaction is 1-(5Z,8Z,11Z,14Z-eicosatetraenoyl)-2-O-hexadecyl-sn-glycero-3-phosphocholine + H2O = 2-O-hexadecyl-sn-glycero-3-phosphocholine + (5Z,8Z,11Z,14Z)-eicosatetraenoate + H(+). The enzyme catalyses 1-octadecanoyl-2-(5Z,8Z,11Z,14Z-eicosatetraenoyl)-sn-glycero-3-phosphocholine + glycerol = 1-(5Z,8Z,11Z,14Z-eicosatetraenoyl)-glycerol + 1-octadecanoyl-sn-glycero-3-phosphocholine. It carries out the reaction 1-octadecanoyl-2-(9Z,12Z,15Z-octadecatrienoyl)-sn-glycero-3-phosphocholine + glycerol = 1-(9Z,12Z,15Z-octadecatrienoyl)-glycerol + 1-octadecanoyl-sn-glycero-3-phosphocholine. The protein operates within membrane lipid metabolism; glycerophospholipid metabolism. It participates in lipid metabolism; arachidonate metabolism. It functions in the pathway lipid metabolism; prostaglandin biosynthesis. Its pathway is lipid metabolism; leukotriene B4 biosynthesis. Its activity is regulated as follows. Activated by cytosolic calcium, which is necessary for binding to membrane lipids. Activated by phosphorylation in response to mitogenic stimuli. In terms of biological role, has primarily calcium-dependent phospholipase and lysophospholipase activities, with a major role in membrane lipid remodeling and biosynthesis of lipid mediators of the inflammatory response. Plays an important role in embryo implantation and parturition through its ability to trigger prostanoid production. Preferentially hydrolyzes the ester bond of the fatty acyl group attached at sn-2 position of phospholipids (phospholipase A2 activity). Selectively hydrolyzes sn-2 arachidonoyl group from membrane phospholipids, providing the precursor for eicosanoid biosynthesis via the cyclooxygenase pathway. In an alternative pathway of eicosanoid biosynthesis, hydrolyzes sn-2 fatty acyl chain of eicosanoid lysophopholipids to release free bioactive eicosanoids. Hydrolyzes the ester bond of the fatty acyl group attached at sn-1 position of phospholipids (phospholipase A1 activity) only if an ether linkage rather than an ester linkage is present at the sn-2 position. This hydrolysis is not stereospecific. Has calcium-independent phospholipase A2 and lysophospholipase activities in the presence of phosphoinositides. Has O-acyltransferase activity. Catalyzes the transfer of fatty acyl chains from phospholipids to a primary hydroxyl group of glycerol (sn-1 or sn-3), potentially contributing to monoacylglycerol synthesis. This is Cytosolic phospholipase A2 (PLA2G4A) from Bos taurus (Bovine).